The sequence spans 368 residues: 3-dehydroquinate synthase (368 aa).

NAD(+) is bound by residues 110 to 114, 134 to 135, K147, and K156; these read GVIGD and TS. Residues E189, H254, and H271 each contribute to the Zn(2+) site.

Belongs to the sugar phosphate cyclases superfamily. Dehydroquinate synthase family. It depends on NAD(+) as a cofactor. The cofactor is Co(2+). Zn(2+) serves as cofactor.

Its subcellular location is the cytoplasm. It carries out the reaction 7-phospho-2-dehydro-3-deoxy-D-arabino-heptonate = 3-dehydroquinate + phosphate. It participates in metabolic intermediate biosynthesis; chorismate biosynthesis; chorismate from D-erythrose 4-phosphate and phosphoenolpyruvate: step 2/7. In terms of biological role, catalyzes the conversion of 3-deoxy-D-arabino-heptulosonate 7-phosphate (DAHP) to dehydroquinate (DHQ). This is 3-dehydroquinate synthase from Thermosynechococcus vestitus (strain NIES-2133 / IAM M-273 / BP-1).